The following is a 406-amino-acid chain: Arginine biosynthesis bifunctional protein ArgJ (406 aa).

Thr-152, Lys-179, Thr-190, Glu-277, Asn-401, and Ser-406 together coordinate substrate. Residue Thr-190 is the Nucleophile of the active site.

Belongs to the ArgJ family. Heterotetramer of two alpha and two beta chains.

It localises to the cytoplasm. It catalyses the reaction N(2)-acetyl-L-ornithine + L-glutamate = N-acetyl-L-glutamate + L-ornithine. The catalysed reaction is L-glutamate + acetyl-CoA = N-acetyl-L-glutamate + CoA + H(+). Its pathway is amino-acid biosynthesis; L-arginine biosynthesis; L-ornithine and N-acetyl-L-glutamate from L-glutamate and N(2)-acetyl-L-ornithine (cyclic): step 1/1. It participates in amino-acid biosynthesis; L-arginine biosynthesis; N(2)-acetyl-L-ornithine from L-glutamate: step 1/4. Catalyzes two activities which are involved in the cyclic version of arginine biosynthesis: the synthesis of N-acetylglutamate from glutamate and acetyl-CoA as the acetyl donor, and of ornithine by transacetylation between N(2)-acetylornithine and glutamate. The sequence is that of Arginine biosynthesis bifunctional protein ArgJ from Neisseria gonorrhoeae (strain ATCC 700825 / FA 1090).